A 249-amino-acid polypeptide reads, in one-letter code: V-type proton ATPase subunit D 2 (249 aa).

This sequence belongs to the V-ATPase D subunit family. V-ATPase is a heteromultimeric enzyme made up of two complexes: the ATP-hydrolytic V1 complex and the proton translocation V0 complex. The V1 complex consists of three catalytic AB heterodimers that form a heterohexamer, three peripheral stalks each consisting of EG heterodimers, one central rotor including subunits D and F, and the regulatory subunits C and H. The proton translocation complex V0 consists of the proton transport subunit a, a ring of proteolipid subunits c9c'', rotary subunit d, subunits e and f, and the accessory subunits VhaAC45 and ATP6AP2.

Its function is as follows. Subunit of the V1 complex of vacuolar(H+)-ATPase (V-ATPase), a multisubunit enzyme composed of a peripheral complex (V1) that hydrolyzes ATP and a membrane integral complex (V0) that translocates protons. V-ATPase is responsible for acidifying and maintaining the pH of intracellular compartments and in some cell types, is targeted to the plasma membrane, where it is responsible for acidifying the extracellular environment. This chain is V-type proton ATPase subunit D 2 (Vha36-3), found in Drosophila melanogaster (Fruit fly).